The primary structure comprises 200 residues: Dephospho-CoA kinase (200 aa).

In terms of domain architecture, DPCK spans valine 4–aspartate 200. An ATP-binding site is contributed by alanine 12 to threonine 17.

The protein belongs to the CoaE family.

Its subcellular location is the cytoplasm. The catalysed reaction is 3'-dephospho-CoA + ATP = ADP + CoA + H(+). It functions in the pathway cofactor biosynthesis; coenzyme A biosynthesis; CoA from (R)-pantothenate: step 5/5. Its function is as follows. Catalyzes the phosphorylation of the 3'-hydroxyl group of dephosphocoenzyme A to form coenzyme A. The chain is Dephospho-CoA kinase from Bacillus anthracis.